The sequence spans 129 residues: Small ribosomal subunit protein uS11 (129 aa).

It belongs to the universal ribosomal protein uS11 family. In terms of assembly, part of the 30S ribosomal subunit. Interacts with proteins S7 and S18. Binds to IF-3.

Functionally, located on the platform of the 30S subunit, it bridges several disparate RNA helices of the 16S rRNA. Forms part of the Shine-Dalgarno cleft in the 70S ribosome. The sequence is that of Small ribosomal subunit protein uS11 from Aeromonas hydrophila subsp. hydrophila (strain ATCC 7966 / DSM 30187 / BCRC 13018 / CCUG 14551 / JCM 1027 / KCTC 2358 / NCIMB 9240 / NCTC 8049).